A 410-amino-acid chain; its full sequence is Protein trichome birefringence-like 34 (410 aa).

A helical; Signal-anchor for type II membrane protein transmembrane segment spans residues 13–33 (TSFHTIAAVLVAGLIFTAVFL). The GDS motif signature appears at 133–135 (GDS). A DCXHWCLPGXXDXWN motif motif is present at residues 383–397 (DCIHWCLPGVPDVWN).

This sequence belongs to the PC-esterase family. TBL subfamily.

The protein localises to the golgi apparatus membrane. Its function is as follows. May act as a bridging protein that binds pectin and other cell wall polysaccharides. Probably involved in maintaining esterification of pectins. May be involved in the specific O-acetylation of cell wall polymers. The protein is Protein trichome birefringence-like 34 (TBL34) of Arabidopsis thaliana (Mouse-ear cress).